Here is a 343-residue protein sequence, read N- to C-terminus: Holliday junction branch migration complex subunit RuvB (343 aa).

The segment at 4-193 is large ATPase domain (RuvB-L); the sequence is TDNLTAAQPQ…FGIVSRLEFY (190 aa). ATP is bound by residues Leu32, Arg33, Gly74, Lys77, Thr78, Thr79, 140–142, Arg183, Tyr193, and Arg230; that span reads EDY. Thr78 is a binding site for Mg(2+). A small ATPAse domain (RuvB-S) region spans residues 194–264; the sequence is ENRDLATIVS…IADAALSMLD (71 aa). A head domain (RuvB-H) region spans residues 267-343; the sequence is VQGLDVMDRK…YLHFGLPVEK (77 aa). Residues Arg322 and Arg327 each coordinate DNA.

Belongs to the RuvB family. As to quaternary structure, homohexamer. Forms an RuvA(8)-RuvB(12)-Holliday junction (HJ) complex. HJ DNA is sandwiched between 2 RuvA tetramers; dsDNA enters through RuvA and exits via RuvB. An RuvB hexamer assembles on each DNA strand where it exits the tetramer. Each RuvB hexamer is contacted by two RuvA subunits (via domain III) on 2 adjacent RuvB subunits; this complex drives branch migration. In the full resolvosome a probable DNA-RuvA(4)-RuvB(12)-RuvC(2) complex forms which resolves the HJ.

The protein localises to the cytoplasm. The catalysed reaction is ATP + H2O = ADP + phosphate + H(+). Its function is as follows. The RuvA-RuvB-RuvC complex processes Holliday junction (HJ) DNA during genetic recombination and DNA repair, while the RuvA-RuvB complex plays an important role in the rescue of blocked DNA replication forks via replication fork reversal (RFR). RuvA specifically binds to HJ cruciform DNA, conferring on it an open structure. The RuvB hexamer acts as an ATP-dependent pump, pulling dsDNA into and through the RuvAB complex. RuvB forms 2 homohexamers on either side of HJ DNA bound by 1 or 2 RuvA tetramers; 4 subunits per hexamer contact DNA at a time. Coordinated motions by a converter formed by DNA-disengaged RuvB subunits stimulates ATP hydrolysis and nucleotide exchange. Immobilization of the converter enables RuvB to convert the ATP-contained energy into a lever motion, pulling 2 nucleotides of DNA out of the RuvA tetramer per ATP hydrolyzed, thus driving DNA branch migration. The RuvB motors rotate together with the DNA substrate, which together with the progressing nucleotide cycle form the mechanistic basis for DNA recombination by continuous HJ branch migration. Branch migration allows RuvC to scan DNA until it finds its consensus sequence, where it cleaves and resolves cruciform DNA. The sequence is that of Holliday junction branch migration complex subunit RuvB from Neisseria meningitidis serogroup A / serotype 4A (strain DSM 15465 / Z2491).